We begin with the raw amino-acid sequence, 156 residues long: Iron sulfur cluster assembly protein 2, mitochondrial (156 aa).

The N-terminal 26 residues, 1 to 26 (MFARLANPAHFKPLTGSHITRAAKRL), are a transit peptide targeting the mitochondrion.

It belongs to the NifU family. As to quaternary structure, component of the core Fe-S cluster (ISC) assembly machinery. Interacts with frataxin. Interacts with the mitochondrial co-chaperones JAC1 and SSQ1. Interacts with NFS1. Interacts with ferredoxin YAH1; interacts with the reduced form. The cofactor is [2Fe-2S] cluster.

It localises to the mitochondrion matrix. The protein operates within cofactor biosynthesis; iron-sulfur cluster biosynthesis. Functionally, scaffold protein for the de novo synthesis of iron-sulfur (Fe-S) clusters within mitochondria, which is required for maturation of both mitochondrial and cytoplasmic [2Fe-2S] and [4Fe-4S] proteins. First, a [2Fe-2S] cluster is transiently assembled on the scaffold proteins ISU1 and ISU2. In a second step, the cluster is released from ISU1/ISU2, transferred to glutaredoxin GRX5, followed by the formation of mitochondrial [2Fe-2S] proteins, the synthesis of [4Fe-4S] clusters and their target-specific insertion into the recipient apoproteins. Cluster assembly on ISU1/ISU2 depends on the function of the cysteine desulfurase complex NFS1-ISD11, which serves as the sulfur donor for cluster synthesis, the iron-binding protein frataxin (YFH1) as the putative iron donor, and the electron transfer chain comprised of ferredoxin reductase ARH1 and ferredoxin YAH1, which receive their electrons from NADH. Fe-S cluster release from ISU1/ISU2 is achieved by interaction with the Hsp70 chaperone SSQ1, assisted by the DnaJ-like co-chaperone JAC1 and the nucleotide exchange factor MGE1. ISU1 is the major isoform in yeast, while ISU2 is not detectable in cells grown to stationary phase. Also involved in production of a sulfur precursor required for thiolation of cytoplasmic tRNAs. This Saccharomyces cerevisiae (strain ATCC 204508 / S288c) (Baker's yeast) protein is Iron sulfur cluster assembly protein 2, mitochondrial.